Here is a 227-residue protein sequence, read N- to C-terminus: Thymidine kinase (227 aa).

ATP-binding positions include 15 to 22 (GSMFSGKT) and 87 to 90 (DEAQ). The active-site Proton acceptor is E88. The Zn(2+) site is built by C144, C147, C176, and C179. Positions 198-227 (RAVATDDADASTNEADPEAADAASADGTAA) are disordered. Low complexity predominate over residues 217 to 227 (ADAASADGTAA).

Belongs to the thymidine kinase family. Homotetramer.

It localises to the cytoplasm. The catalysed reaction is thymidine + ATP = dTMP + ADP + H(+). In Salinibacter ruber (strain DSM 13855 / M31), this protein is Thymidine kinase.